We begin with the raw amino-acid sequence, 235 residues long: UPF0758 protein CD630_11440 (235 aa).

Positions Lys113–Ile235 constitute an MPN domain. Zn(2+) contacts are provided by His184, His186, and Asp197. Residues His184–Asp197 carry the JAMM motif motif.

This sequence belongs to the UPF0758 family.

The protein is UPF0758 protein CD630_11440 of Clostridioides difficile (strain 630) (Peptoclostridium difficile).